Here is a 572-residue protein sequence, read N- to C-terminus: Dihydroxy-acid dehydratase (572 aa).

Position 57 (C57) interacts with [2Fe-2S] cluster. D89 provides a ligand contact to Mg(2+). Position 130 (C130) interacts with [2Fe-2S] cluster. Mg(2+)-binding residues include D131 and K132. K132 is modified (N6-carboxylysine). C202 is a binding site for [2Fe-2S] cluster. Residue E453 coordinates Mg(2+). Catalysis depends on S479, which acts as the Proton acceptor.

This sequence belongs to the IlvD/Edd family. As to quaternary structure, homodimer. Requires [2Fe-2S] cluster as cofactor. The cofactor is Mg(2+).

It catalyses the reaction (2R)-2,3-dihydroxy-3-methylbutanoate = 3-methyl-2-oxobutanoate + H2O. The enzyme catalyses (2R,3R)-2,3-dihydroxy-3-methylpentanoate = (S)-3-methyl-2-oxopentanoate + H2O. It participates in amino-acid biosynthesis; L-isoleucine biosynthesis; L-isoleucine from 2-oxobutanoate: step 3/4. The protein operates within amino-acid biosynthesis; L-valine biosynthesis; L-valine from pyruvate: step 3/4. Functions in the biosynthesis of branched-chain amino acids. Catalyzes the dehydration of (2R,3R)-2,3-dihydroxy-3-methylpentanoate (2,3-dihydroxy-3-methylvalerate) into 2-oxo-3-methylpentanoate (2-oxo-3-methylvalerate) and of (2R)-2,3-dihydroxy-3-methylbutanoate (2,3-dihydroxyisovalerate) into 2-oxo-3-methylbutanoate (2-oxoisovalerate), the penultimate precursor to L-isoleucine and L-valine, respectively. This Streptococcus sanguinis (strain SK36) protein is Dihydroxy-acid dehydratase.